Reading from the N-terminus, the 216-residue chain is GTP cyclohydrolase 1 (216 aa).

Residues cysteine 108, histidine 111, and cysteine 179 each contribute to the Zn(2+) site.

The protein belongs to the GTP cyclohydrolase I family. In terms of assembly, toroid-shaped homodecamer, composed of two pentamers of five dimers.

It carries out the reaction GTP + H2O = 7,8-dihydroneopterin 3'-triphosphate + formate + H(+). The protein operates within cofactor biosynthesis; 7,8-dihydroneopterin triphosphate biosynthesis; 7,8-dihydroneopterin triphosphate from GTP: step 1/1. In Shewanella amazonensis (strain ATCC BAA-1098 / SB2B), this protein is GTP cyclohydrolase 1.